We begin with the raw amino-acid sequence, 346 residues long: Dimethyladenosine transferase 1, mitochondrial (346 aa).

The transit peptide at 1 to 27 (MAASGKLSTCRLPPLPTIREIIKLLRL) directs the protein to the mitochondrion. S-adenosyl-L-methionine-binding residues include Leu38, Gly63, Glu85, Lys86, Asp111, Val112, and Asn141.

This sequence belongs to the class I-like SAM-binding methyltransferase superfamily. rRNA adenine N(6)-methyltransferase family. KsgA subfamily. As to quaternary structure, interacts with mitochondrial RNA polymerase POLRMT. Interacts with TFAM. Bound to the maturing mtSSU until the late stages of assembly. Ubiquitously expressed.

It localises to the mitochondrion. The catalysed reaction is adenosine(N)/adenosine(N+1) in rRNA + 4 S-adenosyl-L-methionine = N(6)-dimethyladenosine(N)/N(6)-dimethyladenosine(N+1) in rRNA + 4 S-adenosyl-L-homocysteine + 4 H(+). Its function is as follows. Mitochondrial methyltransferase which uses S-adenosyl methionine to dimethylate two highly conserved adjacent adenosine residues (A1583 and A1584) within the loop of helix 45 at the 3-prime end of 12S rRNA, thereby regulating the assembly or stability of the small subunit of the mitochondrial ribosome. Also required for basal transcription of mitochondrial DNA, probably via its interaction with POLRMT and TFAM. Stimulates transcription independently of the methyltransferase activity. This chain is Dimethyladenosine transferase 1, mitochondrial, found in Homo sapiens (Human).